Consider the following 294-residue polypeptide: MSSEGFVNLDKPAGWTSHDCVAKLRRLLRERRIGHGGTLDPAVTGVLPIAVGRATRLLPYLPSGKTYVGTIRFGLQTSTDDLTGDRLAEADTSHLSREAIEAALPQFLGHIQQQPPQVSAVQVQGQRLYQLARRGEAPTELPWRTVEIQSIRILQWRSGSQAELSVEIHCGAGTYIRSLARDLGAVLGVGGTLAELRRTASSGFDLNQSTPLTELLDGAAVPLLALDLPLQHLAKVQLSAETSDRWRQGQAMPVPDSVLPDAAPVRVYDLNGQFLGIGAIAAGLCKPKVVLAAL.

Catalysis depends on Asp-40, which acts as the Nucleophile.

Belongs to the pseudouridine synthase TruB family. Type 1 subfamily.

The catalysed reaction is uridine(55) in tRNA = pseudouridine(55) in tRNA. In terms of biological role, responsible for synthesis of pseudouridine from uracil-55 in the psi GC loop of transfer RNAs. The polypeptide is tRNA pseudouridine synthase B (Synechococcus elongatus (strain ATCC 33912 / PCC 7942 / FACHB-805) (Anacystis nidulans R2)).